The primary structure comprises 147 residues: Phospholipase A2 inhibitor subunit A (147 aa).

The region spanning 62-143 is the C-type lectin domain; the sequence is EICEEAGGHI…DENLLVVCEF (82 aa). 2 cysteine pairs are disulfide-bonded: C64–C141 and C119–C133. N103 carries N-linked (GlcNAc...) asparagine glycosylation.

This sequence belongs to the alpha-type phospholipase A2 inhibitor family. As to quaternary structure, homo- or heterotrimer; homotrimer of PLI-A chains, two PLI-A and one PLI-B chains, one PLI-A and two PLI-B chains, and homotrimer of PLI-B chains (with a ratio of 1:3:3:1). In terms of tissue distribution, expressed by the liver.

It is found in the secreted. Its function is as follows. PLI binds directly phospholipase A2 in the presence or absence of calcium. Inhibitory activity of the PLI-A homotrimer is more specific than that of the PLI-B homotrimer. The polypeptide is Phospholipase A2 inhibitor subunit A (Protobothrops flavoviridis (Habu)).